The primary structure comprises 248 residues: Granzyme C (248 aa).

An N-terminal signal peptide occupies residues 1-18 (MPPVLILLTLLLPLRAGA). Positions 19–20 (EE) are excised as a propeptide. The region spanning 21-246 (IIGGNEISPH…FVSWIKKTMK (226 aa)) is the Peptidase S1 domain. Cysteine 50 and cysteine 66 are disulfide-bonded. Residues histidine 65 and aspartate 109 each act as charge relay system in the active site. Cystine bridges form between cysteine 143–cysteine 210 and cysteine 174–cysteine 189. The Charge relay system role is filled by serine 204.

Belongs to the peptidase S1 family. Granzyme subfamily.

It localises to the cytolytic granule. This enzyme is probably necessary for target cell lysis in cell-mediated immune responses. The chain is Granzyme C (Gzmc) from Mus musculus (Mouse).